We begin with the raw amino-acid sequence, 1388 residues long: DNA-directed RNA polymerase subunit beta (1388 aa).

Belongs to the RNA polymerase beta chain family. The RNAP catalytic core consists of 2 alpha, 1 beta, 1 beta' and 1 omega subunit. When a sigma factor is associated with the core the holoenzyme is formed, which can initiate transcription.

The catalysed reaction is RNA(n) + a ribonucleoside 5'-triphosphate = RNA(n+1) + diphosphate. In terms of biological role, DNA-dependent RNA polymerase catalyzes the transcription of DNA into RNA using the four ribonucleoside triphosphates as substrates. This Xylella fastidiosa (strain Temecula1 / ATCC 700964) protein is DNA-directed RNA polymerase subunit beta.